A 135-amino-acid chain; its full sequence is MRRANRLRRPAQFRRVRQTGRTFSSAWLTLTVAPGRRDGVRCGFITGRRLGKAVQRNRARRRVREAVRLLLPSLTTGYDLLFAIRSPEVIEAPFSQLQADIIRLLRQACLLTTPETEPVSPVSPTSLPQNERGSP.

The tract at residues 115-135 (ETEPVSPVSPTSLPQNERGSP) is disordered. Residues 122 to 135 (VSPTSLPQNERGSP) show a composition bias toward polar residues.

It belongs to the RnpA family. As to quaternary structure, consists of a catalytic RNA component (M1 or rnpB) and a protein subunit.

The catalysed reaction is Endonucleolytic cleavage of RNA, removing 5'-extranucleotides from tRNA precursor.. In terms of biological role, RNaseP catalyzes the removal of the 5'-leader sequence from pre-tRNA to produce the mature 5'-terminus. It can also cleave other RNA substrates such as 4.5S RNA. The protein component plays an auxiliary but essential role in vivo by binding to the 5'-leader sequence and broadening the substrate specificity of the ribozyme. The protein is Ribonuclease P protein component of Chloroflexus aggregans (strain MD-66 / DSM 9485).